We begin with the raw amino-acid sequence, 379 residues long: Cytokine receptor common subunit gamma (379 aa).

The N-terminal stretch at 1-22 (MLKPPLPLRSLLFLQLPLLGVG) is a signal peptide. Topologically, residues 23–269 (LNPKFLTPSG…ENIENPENPS (247 aa)) are extracellular. A disulfide bridge links Cys-68 with Cys-78. N-linked (GlcNAc...) asparagine glycosylation is found at Asn-77, Asn-81, and Asn-90. A disulfide bridge links Cys-109 with Cys-122. Positions 163-260 (APENLTLRNL…IHWGSNTSKE (98 aa)) constitute a Fibronectin type-III domain. N-linked (GlcNAc...) asparagine glycans are attached at residues Asn-166 and Asn-171. Residues 244–248 (WSDWS) carry the WSXWS motif motif. Residues 270–290 (LFALEAVLIPLGSMGLIVSLI) traverse the membrane as a helical segment. The Cytoplasmic segment spans residues 291–379 (CVYCWLERTM…PPCYTLKPEP (89 aa)). The short motif at 299-307 (TMPRIPTLK) is the Box 1 motif element. Phosphothreonine is present on Thr-305. Positions 349–370 (PPKGGEGPGGSPCSQHSPYWAP) are disordered.

Belongs to the type I cytokine receptor family. Type 5 subfamily. The gamma subunit is common to the IL2, IL4, IL7, IL15, IL21 and probably also the IL13 receptors. Interacts with SHB upon interleukin stimulation.

The protein resides in the cell membrane. Its subcellular location is the cell surface. Common subunit for the receptors for a variety of interleukins. Probably in association with IL15RA, involved in the stimulation of neutrophil phagocytosis by IL15. The polypeptide is Cytokine receptor common subunit gamma (IL2RG) (Bos taurus (Bovine)).